A 279-amino-acid chain; its full sequence is NADPH-dependent 7-cyano-7-deazaguanine reductase (279 aa).

A substrate-binding site is contributed by 86–88 (IES). Residue 88 to 89 (SK) coordinates NADPH. Catalysis depends on Cys187, which acts as the Thioimide intermediate. Asp194 acts as the Proton donor in catalysis. A substrate-binding site is contributed by 226 to 227 (HE). 255 to 256 (RG) lines the NADPH pocket.

Belongs to the GTP cyclohydrolase I family. QueF type 2 subfamily. Homodimer.

It is found in the cytoplasm. It catalyses the reaction 7-aminomethyl-7-carbaguanine + 2 NADP(+) = 7-cyano-7-deazaguanine + 2 NADPH + 3 H(+). Its pathway is tRNA modification; tRNA-queuosine biosynthesis. Catalyzes the NADPH-dependent reduction of 7-cyano-7-deazaguanine (preQ0) to 7-aminomethyl-7-deazaguanine (preQ1). The chain is NADPH-dependent 7-cyano-7-deazaguanine reductase from Actinobacillus pleuropneumoniae serotype 3 (strain JL03).